Consider the following 189-residue polypeptide: HGPRTase-like protein (189 aa).

Belongs to the purine/pyrimidine phosphoribosyltransferase family. Archaeal HPRT subfamily.

May catalyze a purine salvage reaction, the substrate is unknown. In Halomicrobium mukohataei (strain ATCC 700874 / DSM 12286 / JCM 9738 / NCIMB 13541) (Haloarcula mukohataei), this protein is HGPRTase-like protein.